The chain runs to 480 residues: Chromosomal replication initiator protein DnaA (480 aa).

The domain I, interacts with DnaA modulators stretch occupies residues 1 to 71 (MRHDALFERV…TTLVQQEDSE (71 aa)). A domain II region spans residues 71-137 (EILKVEILVR…RPVQAPLFGS (67 aa)). A domain III, AAA+ region region spans residues 138–360 (PLDQRYGFDS…GAFNQLLFRR (223 aa)). Residues Gly184, Gly186, Lys187, and Thr188 each coordinate ATP. The domain IV, binds dsDNA stretch occupies residues 361–480 (SFEPQLSIER…IELLKRLINE (120 aa)).

This sequence belongs to the DnaA family. As to quaternary structure, oligomerizes as a right-handed, spiral filament on DNA at oriC.

It localises to the cytoplasm. Its function is as follows. Plays an essential role in the initiation and regulation of chromosomal replication. ATP-DnaA binds to the origin of replication (oriC) to initiate formation of the DNA replication initiation complex once per cell cycle. Binds the DnaA box (a 9 base pair repeat at the origin) and separates the double-stranded (ds)DNA. Forms a right-handed helical filament on oriC DNA; dsDNA binds to the exterior of the filament while single-stranded (ss)DNA is stabiized in the filament's interior. The ATP-DnaA-oriC complex binds and stabilizes one strand of the AT-rich DNA unwinding element (DUE), permitting loading of DNA polymerase. After initiation quickly degrades to an ADP-DnaA complex that is not apt for DNA replication. Binds acidic phospholipids. In Rhizobium meliloti (strain 1021) (Ensifer meliloti), this protein is Chromosomal replication initiator protein DnaA.